Reading from the N-terminus, the 60-residue chain is Metallothionein B (60 aa).

Residues 1–28 (MDPCDCSKSGTCNCGGSCTCTNCSCTSC) form a beta region. A divalent metal cation is bound by residues Cys-4, Cys-6, Cys-12, Cys-14, Cys-18, Cys-20, Cys-23, Cys-25, Cys-28, Cys-32, Cys-33, Cys-35, Cys-36, Cys-40, Cys-43, Cys-47, Cys-49, Cys-54, Cys-58, and Cys-59. Positions 29 to 60 (KKSCCPCCPSGCTKCASGCVCKGKTCDTSCCQ) are alpha.

It belongs to the metallothionein superfamily. Type 1 family.

Functionally, metallothioneins have a high content of cysteine residues that bind various heavy metals. The chain is Metallothionein B (mtb) from Chionodraco hamatus (Antarctic teleost icefish).